Reading from the N-terminus, the 294-residue chain is Coiled-coil domain-containing protein 69 (294 aa).

The disordered stretch occupies residues 1 to 43; that stretch reads MGCGHSRLSCCKPPKKRRQRPDQPPKPEPQELGPLNGDTATTD. Glycine 2 is lipidated: N-myristoyl glycine. Residues 20–29 show a composition bias toward basic and acidic residues; the sequence is RPDQPPKPEP. A coiled-coil region spans residues 47–270; the sequence is ASEEAEQHQK…QEKEELLYRV (224 aa). 2 positions are modified to phosphoserine: serine 152 and serine 239.

This sequence belongs to the CCDC69 family.

It is found in the cytoplasm. The protein localises to the cytoskeleton. It localises to the spindle. Its subcellular location is the midbody. In terms of biological role, may act as a scaffold to regulate the recruitment and assembly of spindle midzone components. Required for the localization of AURKB and PLK1 to the spindle midzone. This is Coiled-coil domain-containing protein 69 (CCDC69) from Bos taurus (Bovine).